A 97-amino-acid chain; its full sequence is Co-chaperonin GroES (97 aa).

Belongs to the GroES chaperonin family. As to quaternary structure, heptamer of 7 subunits arranged in a ring. Interacts with the chaperonin GroEL.

The protein localises to the cytoplasm. Its function is as follows. Together with the chaperonin GroEL, plays an essential role in assisting protein folding. The GroEL-GroES system forms a nano-cage that allows encapsulation of the non-native substrate proteins and provides a physical environment optimized to promote and accelerate protein folding. GroES binds to the apical surface of the GroEL ring, thereby capping the opening of the GroEL channel. The protein is Co-chaperonin GroES of Erwinia tasmaniensis (strain DSM 17950 / CFBP 7177 / CIP 109463 / NCPPB 4357 / Et1/99).